The sequence spans 130 residues: S-adenosylmethionine decarboxylase proenzyme (130 aa).

Ser-63 functions as the Schiff-base intermediate with substrate; via pyruvic acid in the catalytic mechanism. At Ser-63 the chain carries Pyruvic acid (Ser); by autocatalysis. His-68 acts as the Proton acceptor; for processing activity in catalysis. Cys-83 serves as the catalytic Proton donor; for catalytic activity.

This sequence belongs to the prokaryotic AdoMetDC family. Type 1 subfamily. In terms of assembly, heterotetramer of two alpha and two beta chains arranged as a dimer of alpha/beta heterodimers. The cofactor is pyruvate. Post-translationally, is synthesized initially as an inactive proenzyme. Formation of the active enzyme involves a self-maturation process in which the active site pyruvoyl group is generated from an internal serine residue via an autocatalytic post-translational modification. Two non-identical subunits are generated from the proenzyme in this reaction, and the pyruvate is formed at the N-terminus of the alpha chain, which is derived from the carboxyl end of the proenzyme. The post-translation cleavage follows an unusual pathway, termed non-hydrolytic serinolysis, in which the side chain hydroxyl group of the serine supplies its oxygen atom to form the C-terminus of the beta chain, while the remainder of the serine residue undergoes an oxidative deamination to produce ammonia and the pyruvoyl group blocking the N-terminus of the alpha chain.

The catalysed reaction is S-adenosyl-L-methionine + H(+) = S-adenosyl 3-(methylsulfanyl)propylamine + CO2. Its pathway is amine and polyamine biosynthesis; S-adenosylmethioninamine biosynthesis; S-adenosylmethioninamine from S-adenosyl-L-methionine: step 1/1. Functionally, catalyzes the decarboxylation of S-adenosylmethionine to S-adenosylmethioninamine (dcAdoMet), the propylamine donor required for the synthesis of the polyamines spermine and spermidine from the diamine putrescine. The chain is S-adenosylmethionine decarboxylase proenzyme from Thermosipho melanesiensis (strain DSM 12029 / CIP 104789 / BI429).